The chain runs to 207 residues: Large ribosomal subunit protein bL20 (207 aa).

Residues 117–161 (QETQPQPEEKTSLQPEKVLSTELSEEKSDDTLETKPQTTQVKAKK) are disordered. The segment covering 140–149 (SEEKSDDTLE) has biased composition (basic and acidic residues).

This sequence belongs to the bacterial ribosomal protein bL20 family.

In terms of biological role, binds directly to 23S ribosomal RNA and is necessary for the in vitro assembly process of the 50S ribosomal subunit. It is not involved in the protein synthesizing functions of that subunit. The polypeptide is Large ribosomal subunit protein bL20 (Onion yellows phytoplasma (strain OY-M)).